We begin with the raw amino-acid sequence, 199 residues long: Peptidyl-tRNA hydrolase (199 aa).

Tyr18 provides a ligand contact to tRNA. The active-site Proton acceptor is the His23. The tRNA site is built by Tyr72, Asn74, and Asn120.

The protein belongs to the PTH family. As to quaternary structure, monomer.

The protein localises to the cytoplasm. It catalyses the reaction an N-acyl-L-alpha-aminoacyl-tRNA + H2O = an N-acyl-L-amino acid + a tRNA + H(+). Hydrolyzes ribosome-free peptidyl-tRNAs (with 1 or more amino acids incorporated), which drop off the ribosome during protein synthesis, or as a result of ribosome stalling. Its function is as follows. Catalyzes the release of premature peptidyl moieties from peptidyl-tRNA molecules trapped in stalled 50S ribosomal subunits, and thus maintains levels of free tRNAs and 50S ribosomes. In Bifidobacterium animalis subsp. lactis (strain AD011), this protein is Peptidyl-tRNA hydrolase.